The primary structure comprises 150 residues: Small ribosomal subunit protein bS6 (150 aa).

Residues 92–150 (KGINKPAKPKKTFKKTFVARKFSRDDESKTHSTEEPRRANTKSTYKKSTSFSQDNKNKK) form a disordered region. Over residues 98-109 (AKPKKTFKKTFV) the composition is skewed to basic residues. Residues 113 to 129 (FSRDDESKTHSTEEPRR) are compositionally biased toward basic and acidic residues. Residues 132–141 (TKSTYKKSTS) are compositionally biased toward low complexity.

Belongs to the bacterial ribosomal protein bS6 family.

Functionally, binds together with bS18 to 16S ribosomal RNA. The polypeptide is Small ribosomal subunit protein bS6 (Mycoplasmopsis pulmonis (strain UAB CTIP) (Mycoplasma pulmonis)).